The following is a 389-amino-acid chain: GDP-fucose protein O-fucosyltransferase 1 (389 aa).

An N-terminal signal peptide occupies residues methionine 1 to alanine 21. A glycan (N-linked (GlcNAc...) asparagine) is linked at asparagine 24. Cysteine 35 and cysteine 37 are joined by a disulfide. Arginine 40–asparagine 43 is a binding site for substrate. The cysteines at positions 119 and 135 are disulfide-linked. Histidine 238–arginine 240 lines the substrate pocket. Intrachain disulfides connect cysteine 249–cysteine 281 and cysteine 266–cysteine 353. Threonine 356–phenylalanine 357 is a binding site for substrate.

It belongs to the glycosyltransferase 65 family. As to quaternary structure, monomer.

The protein localises to the endoplasmic reticulum. It catalyses the reaction L-seryl-[protein] + GDP-beta-L-fucose = 3-O-(alpha-L-fucosyl)-L-seryl-[protein] + GDP + H(+). The catalysed reaction is L-threonyl-[protein] + GDP-beta-L-fucose = 3-O-(alpha-L-fucosyl)-L-threonyl-[protein] + GDP + H(+). Its pathway is protein modification; protein glycosylation. In terms of biological role, catalyzes the reaction that attaches fucose through an O-glycosidic linkage to a conserved serine or threonine residue found in the consensus sequence C2-X(4,5)-[S/T]-C3 of EGF domains, where C2 and C3 are the second and third conserved cysteines. Specifically uses GDP-fucose as donor substrate and proper disulfide pairing of the substrate EGF domains is required for fucose transfer. This chain is GDP-fucose protein O-fucosyltransferase 1, found in Caenorhabditis elegans.